The chain runs to 130 residues: Small ribosomal subunit protein uS8 (130 aa).

This sequence belongs to the universal ribosomal protein uS8 family. Part of the 30S ribosomal subunit. Contacts proteins S5 and S12.

One of the primary rRNA binding proteins, it binds directly to 16S rRNA central domain where it helps coordinate assembly of the platform of the 30S subunit. The chain is Small ribosomal subunit protein uS8 from Pseudomonas fluorescens (strain SBW25).